The sequence spans 159 residues: Ribosomal RNA large subunit methyltransferase H (159 aa).

S-adenosyl-L-methionine is bound by residues leucine 76, glycine 108, and phenylalanine 127 to leucine 132.

The protein belongs to the RNA methyltransferase RlmH family. As to quaternary structure, homodimer.

Its subcellular location is the cytoplasm. The catalysed reaction is pseudouridine(1915) in 23S rRNA + S-adenosyl-L-methionine = N(3)-methylpseudouridine(1915) in 23S rRNA + S-adenosyl-L-homocysteine + H(+). Its function is as follows. Specifically methylates the pseudouridine at position 1915 (m3Psi1915) in 23S rRNA. The sequence is that of Ribosomal RNA large subunit methyltransferase H from Bacillus cytotoxicus (strain DSM 22905 / CIP 110041 / 391-98 / NVH 391-98).